The primary structure comprises 103 residues: Small ribosomal subunit protein uS10 (103 aa).

It belongs to the universal ribosomal protein uS10 family. Part of the 30S ribosomal subunit.

In terms of biological role, involved in the binding of tRNA to the ribosomes. This is Small ribosomal subunit protein uS10 from Polynucleobacter asymbioticus (strain DSM 18221 / CIP 109841 / QLW-P1DMWA-1) (Polynucleobacter necessarius subsp. asymbioticus).